The following is a 245-amino-acid chain: 8-amino-3,8-dideoxy-manno-octulosonate cytidylyltransferase (245 aa).

The protein belongs to the KdsB family.

The protein resides in the cytoplasm. The catalysed reaction is 8-amino-3,8-dideoxy-alpha-D-manno-octulosonate + CTP = CMP-8-amino-3,8-dideoxy-alpha-D-manno-oct-2-ulosonate + diphosphate. Its pathway is bacterial outer membrane biogenesis; lipopolysaccharide biosynthesis. In terms of biological role, activates KDO8N (a required 8-carbon sugar) for incorporation into bacterial lipopolysaccharide in the Shewanella genus. In Shewanella oneidensis (strain ATCC 700550 / JCM 31522 / CIP 106686 / LMG 19005 / NCIMB 14063 / MR-1), this protein is 8-amino-3,8-dideoxy-manno-octulosonate cytidylyltransferase.